We begin with the raw amino-acid sequence, 859 residues long: Autoinducer 2 sensor kinase/phosphatase LuxQ (859 aa).

2 consecutive transmembrane segments (helical) span residues 15–35 and 280–300; these read ATLITKIIILVLAPIILGIFI and IQHILAMLASIIGMIMIALMS. The 223-residue stretch at 489–711 folds into the Histidine kinase domain; sequence KMSHEIRTPI…TFVITLPVKD (223 aa). Histidine 492 is subject to Phosphohistidine; by autocatalysis. In terms of domain architecture, Response regulatory spans 736-851; sequence KVLLVEDNHT…ALHEAFVDFK (116 aa). 4-aspartylphosphate is present on aspartate 785.

As to quaternary structure, binds the complex formed by AI-2 and LuxP.

The protein resides in the cell inner membrane. The catalysed reaction is ATP + protein L-histidine = ADP + protein N-phospho-L-histidine.. In terms of biological role, at low cell density, in absence of AI-2 (autoinducer 2), LuxQ has a kinase activity and autophosphorylates on a histidine residue. The phosphoryl group is then transferred to an aspartate residue in the response regulator domain. The phosphoryl group is transferred to LuxU, and ultimately to LuxO. At high cell density, in the presence of AI-2, the kinase activity is inactivated, and the response regulator domain has a phosphatase activity. The protein is Autoinducer 2 sensor kinase/phosphatase LuxQ (luxQ) of Vibrio harveyi (Beneckea harveyi).